The chain runs to 239 residues: Ribonuclease PH (239 aa).

Phosphate-binding positions include R87 and 125–127 (GTR).

This sequence belongs to the RNase PH family. As to quaternary structure, homohexameric ring arranged as a trimer of dimers.

It catalyses the reaction tRNA(n+1) + phosphate = tRNA(n) + a ribonucleoside 5'-diphosphate. In terms of biological role, phosphorolytic 3'-5' exoribonuclease that plays an important role in tRNA 3'-end maturation. Removes nucleotide residues following the 3'-CCA terminus of tRNAs; can also add nucleotides to the ends of RNA molecules by using nucleoside diphosphates as substrates, but this may not be physiologically important. Probably plays a role in initiation of 16S rRNA degradation (leading to ribosome degradation) during starvation. This is Ribonuclease PH from Ectopseudomonas mendocina (strain ymp) (Pseudomonas mendocina).